A 518-amino-acid polypeptide reads, in one-letter code: Triacylglycerol lipase OBL1 (518 aa).

A helical transmembrane segment spans residues 93 to 113 (GFVVDFFLNLFSANGGFFGLL). A GXSXG motif is present at residues 337 to 341 (GHSLG). The active-site Nucleophile is Ser339. Catalysis depends on charge relay system residues Asp403 and His496.

Belongs to the AB hydrolase superfamily. Lipase family. Expressed in pollen grains, pollen tubes, developing embryos, developing seeds and germinating seeds.

The protein localises to the lipid droplet. It localises to the membrane. It carries out the reaction 1,2-di-(9Z-octadecenoyl)-glycerol + (9Z)-octadecenoate + H(+) = 1,2,3-tri-(9Z-octadecenoyl)-glycerol + H2O. It catalyses the reaction 1-(9Z-octadecenoyl)-glycerol + H2O = glycerol + (9Z)-octadecenoate + H(+). Acid lipase that can hydrolyze a range of triacylglycerols without a clear preference for acyl-chains. Can also cleave 1,2-diacylglycerol, 1,3-diacylglycerol and 1-monoacylglycerol, but not phosphatidylcholine, phosphatidylethanolamine, or sterol esters. Required for pollen tube growth. Triacylglycerol hydrolysis by OBL1 may provide acyl groups for the synthesis of membrane lipids in growing pollen tubes. This Arabidopsis thaliana (Mouse-ear cress) protein is Triacylglycerol lipase OBL1.